The sequence spans 447 residues: Tubulin beta-5 chain (447 aa).

Positions 11, 69, 138, 142, 143, 144, 204, and 226 each coordinate GTP. Glutamate 69 contacts Mg(2+).

The protein belongs to the tubulin family. As to quaternary structure, dimer of alpha and beta chains. A typical microtubule is a hollow water-filled tube with an outer diameter of 25 nm and an inner diameter of 15 nM. Alpha-beta heterodimers associate head-to-tail to form protofilaments running lengthwise along the microtubule wall with the beta-tubulin subunit facing the microtubule plus end conferring a structural polarity. Microtubules usually have 13 protofilaments but different protofilament numbers can be found in some organisms and specialized cells. Requires Mg(2+) as cofactor.

The protein localises to the cytoplasm. It localises to the cytoskeleton. Its function is as follows. Tubulin is the major constituent of microtubules, a cylinder consisting of laterally associated linear protofilaments composed of alpha- and beta-tubulin heterodimers. Microtubules grow by the addition of GTP-tubulin dimers to the microtubule end, where a stabilizing cap forms. Below the cap, tubulin dimers are in GDP-bound state, owing to GTPase activity of alpha-tubulin. This chain is Tubulin beta-5 chain (TUBB5), found in Triticum aestivum (Wheat).